The primary structure comprises 1055 residues: Leukotoxin (1055 aa).

Residues Gln11–Leu49 are a coiled coil. Cholesterol recognition/amino acid consensus (CRAC) region stretches follow at residues Leu334 to Arg340 and Val502 to Lys506. Hemolysin-type calcium-binding repeat units lie at residues Ile721 to Phe738, His739 to Leu756, Tyr757 to Leu774, Tyr775 to Leu792, Asp793 to Leu810, Arg811 to Leu828, and Asp829 to Tyr846. The tract at residues Gly795 to Gly815 is disordered. Positions Lys990–Lys1009 are disordered. Over residues Ser993–Leu1006 the composition is skewed to low complexity.

It belongs to the RTX prokaryotic toxin (TC 1.C.11) family. In terms of assembly, interacts specifically with the superoxide dismutase [Cu-Zn]. This interaction may protect LtxA from reactive oxygen species and reactive nitrogen species produced by host inflammatory cells during disease. Interacts with the human leukocyte adhesion glycoprotein LFA-1 (ITGAL-ITGB2). Acylated at Lys-562 and Lys-687 by LtxC. This modification is required for full activity. Isolated methyl esters contain palmitoyl and palmitolyl fatty acyl groups with smaller quantities of myristic and stearic fatty acids.

It is found in the cell outer membrane. It localises to the secreted. In terms of biological role, virulence factor that plays an important role in immune evasion. Lyses human lymphocytes and monocytes. Binds to the LFA-1 integrin on the surface of the host cell and to cholesterol-containing membranes, which probably results in large LtxA-LFA-1 clusters in lipid rafts. Also shows beta-hemolytic activity on certain types of growth media. The polypeptide is Leukotoxin (Aggregatibacter actinomycetemcomitans (Actinobacillus actinomycetemcomitans)).